The primary structure comprises 206 residues: Probable peptidyl-tRNA hydrolase (206 aa).

Residue histidine 48 is the Proton acceptor of the active site. 3 residues coordinate tRNA: tyrosine 83, asparagine 85, and asparagine 137.

It belongs to the PTH family.

The protein localises to the mitochondrion. It catalyses the reaction an N-acyl-L-alpha-aminoacyl-tRNA + H2O = an N-acyl-L-amino acid + a tRNA + H(+). Its function is as follows. Peptidyl-tRNA hydrolase involved in the recycling of tRNA-Lys from diacetyl-lysyl-tRNA-Lys and is important for mitochondrial function. The sequence is that of Probable peptidyl-tRNA hydrolase (pth1) from Schizosaccharomyces pombe (strain 972 / ATCC 24843) (Fission yeast).